A 61-amino-acid chain; its full sequence is Probable pancreatic secretory proteinase inhibitor (61 aa).

A Kazal-like domain is found at leucine 6–cysteine 61. 3 disulfide bridges follow: cysteine 12-cysteine 43, cysteine 21-cysteine 40, and cysteine 29-cysteine 61.

It localises to the secreted. The polypeptide is Probable pancreatic secretory proteinase inhibitor (Anguilla anguilla (European freshwater eel)).